The following is a 691-amino-acid chain: Ribonuclease J (691 aa).

Positions 1–89 (MTDNNHYENN…TRNYAKEELD (89 aa)) are disordered. The interval 1–132 (MTDNNHYENN…KIQVEHLNPH (132 aa)) is loss of region decreases protein stability, still able to interact with RhpA, but has decreased RNase activity even on ssRNA. Positions 10-19 (NESNENSSEN) are enriched in low complexity. Residues 41-57 (RENAQKNGESSHHEAPS) are compositionally biased toward basic and acidic residues. Over residues 58-82 (HHKKEHRPNKKPNNHHKQKHAKTRN) the composition is skewed to basic residues. Lys134 and Lys140 each carry N6-acetyllysine. Zn(2+)-binding residues include His208, His210, Asp212, His213, His277, and Asp299. Lys323, Lys337, and Lys397 each carry N6-acetyllysine. Substrate is bound at residue 500–504 (HVSGH). N6-acetyllysine is present on Lys511. His526 is a Zn(2+) binding site. Lys547, Lys634, and Lys649 each carry N6-acetyllysine.

Belongs to the metallo-beta-lactamase superfamily. RNA-metabolizing metallo-beta-lactamase-like family. Bacterial RNase J subfamily. Homodimer. Homotetramer; dimer of homodimers. Interacts with RNA helicase RphA, might be a member of a minimal RNA degradosome complex. Zn(2+) is required as a cofactor. In terms of processing, acetylated on nine lysine residues. Some of the residues are acetylated by multiple different mechanisms. RimL is partially responsible for the acetylation of Lys-323, Lys-397 and Lys-649. HPB8_1270 homolog is partially responsible for the acetylation of Lys-323, Lys-397, Lys-511 and Lys-649. Acetyl-phosphate-mediated non-enzymatic acetylation pathway takes part in the acetylation of Lys-134, Lys-323, Lys-397, Lys-511 and Lys-649. Acetylation of the remaining residues Lys-140, Lys-337, Lys-547 and Lys-634 occurs by a yet undetermined mechanism. Acetylation on a number of these residues is important for growth regulation and proper cell morphology.

The protein localises to the cytoplasm. Catalytic activity is regulated by the balance between homodimers and homotetramers, with homotetramers being the active forms of this enzyme. Acetylation allosterically regulates the homooligomerization state and hence the catalytic activity. Its function is as follows. An RNase that has 5'-3' exoribonuclease and endoribonuclease activity. Degrades 5'-monophosphorylated ssRNA and dsRNA, considerably more active on ssRNA. Association with RhpA significantly increases the dsRNase activity. Degrades RNA substrate with hairpin structures at both ends with low activity, but presence of RhpA significantly increases the activity on this substrate. Stimulates ATPase activity of RNA helicase RhpA. Involved in stabilization of mRNA but apparently not rRNA. In Helicobacter pylori (strain B128), this protein is Ribonuclease J.